The sequence spans 600 residues: Aspartate--tRNA(Asp/Asn) ligase (600 aa).

Glutamate 174 is an L-aspartate binding site. Positions glutamine 198–lysine 201 are aspartate. Arginine 220 is a binding site for L-aspartate. Residues arginine 220–glutamate 222 and glutamine 229 contribute to the ATP site. L-aspartate is bound at residue histidine 457. ATP is bound at residue glutamate 491. Residue arginine 498 coordinates L-aspartate. Residue glycine 543 to arginine 546 coordinates ATP.

It belongs to the class-II aminoacyl-tRNA synthetase family. Type 1 subfamily. In terms of assembly, homodimer.

It is found in the cytoplasm. The catalysed reaction is tRNA(Asx) + L-aspartate + ATP = L-aspartyl-tRNA(Asx) + AMP + diphosphate. In terms of biological role, aspartyl-tRNA synthetase with relaxed tRNA specificity since it is able to aspartylate not only its cognate tRNA(Asp) but also tRNA(Asn). Reaction proceeds in two steps: L-aspartate is first activated by ATP to form Asp-AMP and then transferred to the acceptor end of tRNA(Asp/Asn). The chain is Aspartate--tRNA(Asp/Asn) ligase from Burkholderia orbicola (strain MC0-3).